A 42-amino-acid chain; its full sequence is Large ribosomal subunit protein bL36 (42 aa).

Belongs to the bacterial ribosomal protein bL36 family.

This is Large ribosomal subunit protein bL36 from Anaplasma phagocytophilum (strain HZ).